Here is a 247-residue protein sequence, read N- to C-terminus: Probable transcriptional regulatory protein DvMF_3201 (247 aa).

The interval 1–21 (MAGHSKWANIQHRKGRQDAKR) is disordered.

This sequence belongs to the TACO1 family.

The protein resides in the cytoplasm. The protein is Probable transcriptional regulatory protein DvMF_3201 of Nitratidesulfovibrio vulgaris (strain DSM 19637 / Miyazaki F) (Desulfovibrio vulgaris).